The primary structure comprises 295 residues: Diaminopimelate epimerase (295 aa).

Substrate-binding residues include Asn11 and Asn67. The active-site Proton donor is the Cys76. Substrate-binding positions include 77–78, Asn171, Asn210, and 228–229; these read GN and ER. The active-site Proton acceptor is the Cys237. 238-239 serves as a coordination point for substrate; it reads GT.

It belongs to the diaminopimelate epimerase family. As to quaternary structure, homodimer.

The protein resides in the cytoplasm. It catalyses the reaction (2S,6S)-2,6-diaminopimelate = meso-2,6-diaminopimelate. It participates in amino-acid biosynthesis; L-lysine biosynthesis via DAP pathway; DL-2,6-diaminopimelate from LL-2,6-diaminopimelate: step 1/1. Its function is as follows. Catalyzes the stereoinversion of LL-2,6-diaminopimelate (L,L-DAP) to meso-diaminopimelate (meso-DAP), a precursor of L-lysine. The sequence is that of Diaminopimelate epimerase from Methanocaldococcus jannaschii (strain ATCC 43067 / DSM 2661 / JAL-1 / JCM 10045 / NBRC 100440) (Methanococcus jannaschii).